We begin with the raw amino-acid sequence, 386 residues long: Chaperone protein DnaJ (386 aa).

A J domain is found at 6–70 (DYYEVLGVDK…QKRAAYDQYG (65 aa)). The CR-type zinc finger occupies 141-223 (GKDTEVSYKR…CHGTGHEKKT (83 aa)). Residues Cys154, Cys157, Cys171, Cys174, Cys197, Cys200, Cys211, and Cys214 each contribute to the Zn(2+) site. CXXCXGXG motif repeat units follow at residues 154–161 (CHTCGGNG), 171–178 (CHKCKGSG), 197–204 (CDVCHGTG), and 211–218 (CETCHGTG). The disordered stretch occupies residues 363 to 386 (LTGQSTEEQQSEGFFDKMKDAFKK). Over residues 364–374 (TGQSTEEQQSE) the composition is skewed to polar residues. Basic and acidic residues predominate over residues 376–386 (FFDKMKDAFKK).

The protein belongs to the DnaJ family. In terms of assembly, homodimer. Zn(2+) serves as cofactor.

The protein resides in the cytoplasm. Participates actively in the response to hyperosmotic and heat shock by preventing the aggregation of stress-denatured proteins and by disaggregating proteins, also in an autonomous, DnaK-independent fashion. Unfolded proteins bind initially to DnaJ; upon interaction with the DnaJ-bound protein, DnaK hydrolyzes its bound ATP, resulting in the formation of a stable complex. GrpE releases ADP from DnaK; ATP binding to DnaK triggers the release of the substrate protein, thus completing the reaction cycle. Several rounds of ATP-dependent interactions between DnaJ, DnaK and GrpE are required for fully efficient folding. Also involved, together with DnaK and GrpE, in the DNA replication of plasmids through activation of initiation proteins. This is Chaperone protein DnaJ from Tetragenococcus halophilus (Pediococcus halophilus).